The sequence spans 303 residues: N-acetyl-D-glucosamine kinase (303 aa).

Residues 4-11 (GFDIGGTK) and 133-140 (GVGGGLIF) each bind ATP. Residues H157, C177, C179, and C184 each coordinate Zn(2+).

It belongs to the ROK (NagC/XylR) family. NagK subfamily.

It carries out the reaction N-acetyl-D-glucosamine + ATP = N-acetyl-D-glucosamine 6-phosphate + ADP + H(+). The protein operates within cell wall biogenesis; peptidoglycan recycling. Functionally, catalyzes the phosphorylation of N-acetyl-D-glucosamine (GlcNAc) derived from cell-wall degradation, yielding GlcNAc-6-P. In Shigella sonnei (strain Ss046), this protein is N-acetyl-D-glucosamine kinase.